Consider the following 31-residue polypeptide: Glucagon-5 (31 aa).

The protein belongs to the glucagon family.

It is found in the secreted. Functionally, glucagon plays a key role in glucose metabolism and homeostasis. Regulates blood glucose by increasing gluconeogenesis and decreasing glycolysis. The protein is Glucagon-5 of Huso dauricus (Kaluga sturgeon).